A 109-amino-acid polypeptide reads, in one-letter code: Nucleoid-associated protein CGSHiEE_00780 (109 aa).

This sequence belongs to the YbaB/EbfC family. Homodimer.

The protein resides in the cytoplasm. It is found in the nucleoid. In terms of biological role, binds to DNA and alters its conformation. May be involved in regulation of gene expression, nucleoid organization and DNA protection. The chain is Nucleoid-associated protein CGSHiEE_00780 from Haemophilus influenzae (strain PittEE).